The following is a 243-amino-acid chain: Juxtaposed with another zinc finger protein 1 (243 aa).

The C2H2-type 1 zinc finger occupies 12–37 (NTCRFGGCGLHFPTLADLIEHIEDNH). The interval 39-79 (DTDPRVLEKQELQQPTYVALSYINRFMTDAARREQESLKKK) is required for interaction with NR2C2. Polar residues predominate over residues 89–108 (SSSVSRGNVSTPPRHSSGSL). Residues 89 to 151 (SSSVSRGNVS…SDSDESWTTE (63 aa)) form a disordered region. Residues T109 and T113 each carry the phosphothreonine modification. Residues 118–130 (PSSSFRSSTPTGS) show a composition bias toward low complexity. Acidic residues predominate over residues 131-148 (EYDEEEVDYEESDSDESW). Residues 173 to 198 (FACPVPGCKKRYKNVNGIKYHAKNGH) form a C2H2-type 2 zinc finger. The C2H2-type 3; degenerate zinc finger occupies 208–230 (FKCRCGKSYKTAQGLRHHTINFH).

Interacts with NR2C2 (via ligand-binding region). In terms of tissue distribution, highest expression in testis with moderate levels in colon, placenta, prostate and ovary and low levels in brain, spleen, liver and small intestine.

It is found in the nucleus. Its function is as follows. Acts as a transcriptional corepressor of orphan nuclear receptor NR2C2. Inhibits expression of the gluconeogenesis enzyme PCK2 through inhibition of NR2C2 activity. Also involved in transcriptional activation of NAMPT by promoting expression of PPARA and PPARD. Plays a role in lipid metabolism by suppressing lipogenesis, increasing lipolysis and decreasing lipid accumulation in adipose tissue. Plays a role in glucose homeostasis by improving glucose metabolism and insulin sensitivity. This Homo sapiens (Human) protein is Juxtaposed with another zinc finger protein 1.